Consider the following 60-residue polypeptide: Putative insect toxin Acra6 (60 aa).

An LCN-type CS-alpha/beta domain is found at 2 to 60; it reads RDGYIRRKDEFKFKCYVDGKDCDDVCKSEGGSAGYCTALGFLCYCAGLPDDKAWKPTSS. 3 disulfide bridges follow: cysteine 16-cysteine 37, cysteine 23-cysteine 44, and cysteine 27-cysteine 46.

The protein belongs to the long (4 C-C) scorpion toxin superfamily. Sodium channel inhibitor family. Beta subfamily. In terms of tissue distribution, expressed by the venom gland.

It is found in the secreted. Depressant insect toxins cause a transient contraction paralysis followed by a slow flaccid paralysis. They bind voltage-independently to sodium channels (Nav) and block action potentials, primarily by depolarizing the axonal membrane and suppressing the sodium current. The chain is Putative insect toxin Acra6 from Androctonus crassicauda (Arabian fat-tailed scorpion).